The chain runs to 2227 residues: MNMSKQGIFQTVGSGLDHILSLADIEEEQMIQSVDRTAVTGASYFTSVDQSSVHTAEVGSHQIEPLKTSVDKPGSKKTQGEKFFLIHSADWLTTHALFHEVAKLDVVKLLYNEQFAVQGLLRYHTYARFGIEIQVQINPTPFQQGGLICAMVPGDQSYGSIASLTVYPHGLLNCNINNVVRIKVPFIYTRGAYHFKDPQYPVWELTIRVWSELNIGTGTSAYTSLNVLARFTDLELHGLTPLSTQMMRNEFRVSTTENVVNLSNYEDARAKMSFALDQEDWKSDPSQGGGIKITHFTTWTSIPTLAAQFPFNASDSVGQQIKVIPVDPYFFQMTNTNPDQKCITALASICQMFCFWRGDLVFDFQVFPTKYHSGRLLFCFVPGNELIDVTGITLKQATTAPCAVMDITGVQSTLRFRVPWISDTPYRVNRYTKSAHQKGEYTAIGKLIVYCYNRLTSPSNVASHVRVNVYLSAINLECFAPLYHAMDVTTQVGDDSGGFSTTVSTEQNVPDPQVGITTMRDLKGKANRGKMDVSGVQAPRGSYQQQLNDPVLAKKVPETFPELKPGESRHTSDHMSIYKFMGRSHFLCTFTFNSNNKEYTFPITLSSTSNPPHGLPSTLRWFFNLFQLYRGPLDLTIIITGATDVDGMAWFTPVGLAVDPWVEKESALSIDYKTALGAVRFNTRRTGNIQIRLPWYSYLYAVSGALDGLGDKTDSTFGLFLFEIANYNHSDEYLSFSCYLSVTEQSEFYFPRAPLNSNAMLSTESMMSRIAAGDLESSVDDPRSEEDRRFESHIECRKPYKELRLEVGKQRLKYAQEELSNEVLPPPRKMKGLFSQAKISLFYTEEHEIMKFSWRGVTADTRALRRFGFSLAAGRSVWTLEMDAGVLTGRLIRLNDEKWTEMKDDKIVSLIEKFTSNKYWSKVNFPHGMLDLEEIAANSKDFPNMSETDLCFLLHWLNPKKINLADRMLGLSGVQEIKEQGVGLIAECRTFLDSIAGTLKSMMFGFHHSVTVEIINTVLCFVKSGILLYVIQQLNQDEHSHIIGLLRVMNYADIGCSVISCGKVFSKMLETVFNWQMDSRMMELRTQSFSNWLRDICSGITIFKSFKDAIYWLYTKLKDFYEVNYGKKKDILNILKDNQQKIEKAIEEADNFCILQIQDVEKFDQYQKGVDLIQKLRTVHSMAQVDPNLGVHLSPLRDCIARVHQKLKNLGSINQAMVTRCEPVVCYLYGKRGGGKSLTSIALATKICKHYGVEPEKNIYTKPVASDYWDGYSGQLVCIIDDIGQNTTDEDWSDFCQLVSGCPMRLNMASLEEKGRHFSSPFIIATSNWSNPSPKTVYVKEAIDRRLHFKVEVKPASFFKNPHNDMLNVNLAKTNDAIKDMSCVDLIMDGHNISLMDLLSSLVMTVEIRKQNMSEFMELWSQGISDDDNDSAVAEFFQSFPSGEPSNWKLSSFFQSVTNHKWVAVGAAVGILGVLVGGWFVYKHFSRKEEEPIPAEGVYHGVTKPKQVIKLDADPVESQSTLEIAGLVRKNLVQFGVGEKNGCVRWVMNALGVKDDWLLVPSHAYKFEKDYEMMEFYFNRGGTYYSISAGNVVIQSLDVGFQDVVLMKVPTIPKFRDITQHFIKKGDVPRALNRLATLVTTVNGTPMLISEGPLKMEEKATYVHKKNDGTTVDLTVDQAWRGKGEGLPGMCGGALVSSNQSIQNAILGIHVAGGNSILVAKLVTQEMFQNIDKKIESQRIMKVEFTQCSMNVVSKTLFRKSPIHHHIDKTMINFPAAMPFSKAEIDPMAMMLSKYSLPIVEEPEDYKEASVFYQNKIVGKTQLVDDFLDLDMAITGAPGIDAINMDSSPGFPYVQEKLTKRDLIWLDENGLLLGVHPRLAQRILFNTVMMENCSDLDVVFTTCPKDELRPLEKVLESKTRAIDACPLDYTILCRMYWGPAISYFHLNPGFHTGVAIGIDPDRQWDELFKTMIRFGDVGLDLDFSAFDASLSPFMIREAGRIMSELSGTPSHFGTALINTIIYSKHLLYNCCYHVCGSMPSGSPCTALLNSIINNINLYYVFSKIFGKSPVFFCQALRILCYGDDVLIVFSRDVQIDNLDLIGQKIVDEFKKLGMTATSADKNVPQLKPVSELTFLKRSFNLVEDRIRPAISEKTIWSLMAWQRSNAEFEQNLENAQWFAFMHGYEFYQKFYYFVQSCLEKEMIEYRLKSYDWWRMRFYDQCFICDLS.

2 consecutive short sequence motifs ((L)YPX(n)L motif) follow at residues 167 to 171 (YPHGL) and 200 to 205 (YPVWEL). Residues 766–836 (MMSRIAAGDL…PRKMKGLFSQ (71 aa)) are involved in P1-2A pentamerization. The chain crosses the membrane as a helical span at residues 1011-1031 (TVEIINTVLCFVKSGILLYVI). Residues 1043 to 1070 (IGLLRVMNYADIGCSVISCGKVFSKMLE) form a membrane-penetrating ability region. A coiled-coil region spans residues 1127–1152 (KKKDILNILKDNQQKIEKAIEEADNF). The SF3 helicase domain maps to 1204-1366 (HQKLKNLGSI…SFFKNPHNDM (163 aa)). 1230-1237 (GKRGGGKS) is a binding site for ATP. A helical transmembrane segment spans residues 1462–1482 (WVAVGAAVGILGVLVGGWFVY). At tyrosine 1499 the chain carries O-(5'-phospho-RNA)-tyrosine. Residues 1514–1728 (DPVESQSTLE…VAKLVTQEMF (215 aa)) enclose the Peptidase C3 domain. Residues histidine 1563, aspartate 1603, and cysteine 1691 each act as for protease 3C activity in the active site. The region spanning 1976–2097 (DVGLDLDFSA…VFSRDVQIDN (122 aa)) is the RdRp catalytic domain.

It belongs to the picornaviridae polyprotein family. Homodimer. Homomultimer; probably interacts with membranes in a multimeric form. Seems to assemble into amyloid-like fibers. In terms of assembly, homodimer. Monomer. Interacts with protein 3CD. As to quaternary structure, interacts with host ACBD3. Interacts with protein 3AB. In terms of assembly, interacts with human MAVS. As to quaternary structure, homodimer; disulfide-linked. Homopentamer. Homooligomer. In terms of assembly, interacts with capsid protein VP2. Interacts with capsid protein VP3. As to quaternary structure, interacts with capsid protein VP1. Interacts with capsid protein VP3. Interacts with capsid protein VP1. Interacts with capsid protein VP2. In terms of processing, specific enzymatic cleavages by viral protease in vivo yield a variety of precursors and mature proteins. Polyprotein processing intermediates are produced, such as P1-2A which is a functional precursor of the structural proteins, VP0 which is a VP4-VP2 precursor, VP1-2A precursor, 3ABC precursor which is a stable and catalytically active precursor of 3A, 3B and 3C proteins, 3AB and 3CD precursors. The assembly signal 2A is removed from VP1-2A by a host protease, possibly host Cathepsin L. This cleavage occurs over a region of 3 amino-acids probably generating VP1 proteins with heterogeneous C-termini. Post-translationally, during virion maturation, immature virions are rendered infectious following cleavage of VP0 into VP4 and VP2. This maturation seems to be an autocatalytic event triggered by the presence of RNA in the capsid and is followed by a conformational change of the particle. The assembly signal 2A is removed from VP1-2A by a host protease, possibly host Cathepsin L in naked virions. This cleavage does not occur in enveloped virions. This cleavage occurs over a region of 3 amino-acids probably generating VP1 proteins with heterogeneous C-termini. In terms of processing, VPg is uridylylated prior to priming replication into VPg-pUpU. Post-translationally, unlike other picornaviruses, does not seem to be myristoylated.

It is found in the virion. The protein localises to the host endosome. It localises to the host multivesicular body. Its subcellular location is the host membrane. The protein resides in the host mitochondrion outer membrane. It is found in the host cytoplasm. The protein localises to the host cytoplasmic vesicle membrane. The enzyme catalyses RNA(n) + a ribonucleoside 5'-triphosphate = RNA(n+1) + diphosphate. The catalysed reaction is a ribonucleoside 5'-triphosphate + H2O = a ribonucleoside 5'-diphosphate + phosphate + H(+). It carries out the reaction Selective cleavage of Gln-|-Gly bond in the poliovirus polyprotein. In other picornavirus reactions Glu may be substituted for Gln, and Ser or Thr for Gly.. Functionally, capsid proteins VP1, VP2, and VP3 form a closed capsid enclosing the viral positive strand RNA genome. All these proteins contain a beta-sheet structure called beta-barrel jelly roll. Together they form an icosahedral capsid (T=3) composed of 60 copies of each VP1, VP2, and VP3, with a diameter of approximately 300 Angstroms. VP1 is situated at the 12 fivefold axes, whereas VP2 and VP3 are located at the quasi-sixfold axes. The naked capsid interacts with the host receptor HAVCR1 to provide virion attachment to and probably entry into the target cell. Its function is as follows. VP0 precursor is a component of the immature procapsids. Plays a role in the assembly of the 12 pentamers into an icosahedral structure. Has not been detected in mature virions, supposedly owing to its small size. In terms of biological role, precursor component of immature procapsids that corresponds to an extended form of the structural protein VP1. After maturation, possibly by the host Cathepsin L, the assembly signal 2A is cleaved to give rise to the mature VP1 protein. Functionally, functions as a viroporin. Affects membrane integrity and causes an increase in membrane permeability. Involved in host intracellular membrane rearrangements probably to give rise to the viral factories. Does not disrupt calcium homeostasis or glycoprotein trafficking. Antagonizes the innate immune response of the host by suppressing IFN-beta synthesis, which it achieves by interfering with the RIG-I/IFIH1 pathway. Its function is as follows. Affects membrane integrity and causes an increase in membrane permeability. Associates with and induces structural rearrangements of intracellular membranes. Displays RNA-binding activity. In terms of biological role, the precursor 3ABC is targeted to the mitochondrial membrane where protease 3C activity cleaves and inhibits the host antiviral protein MAVS, thereby disrupting activation of IRF3 through the IFIH1/MDA5 pathway. In vivo, the protease activity of 3ABC precursor is more efficient in cleaving the 2BC precursor than that of protein 3C. The 3ABC precursor may therefore play a role in the proteolytic processing of the polyprotein. Possible viroporin. Functionally, interacts with the 3CD precursor and with RNA structures found at both the 5'- and 3'-termini of the viral genome. Since the 3AB precursor contains the hydrophobic domain 3A, it probably anchors the whole viral replicase complex to intracellular membranes on which viral RNA synthesis occurs. Its function is as follows. May serve as membrane anchor to the 3AB and 3ABC precursors via its hydrophobic domain. May interact with RNA. Acts as a primer for viral RNA replication and remains covalently bound to viral genomic RNA. VPg is uridylylated prior to priming replication into VPg-pUpU. The VPg-pUpU is then used as primer on the genomic RNA poly(A) by the RNA-dependent RNA polymerase to replicate the viral genome. In terms of biological role, cysteine protease that generates mature viral proteins from the precursor polyprotein. In addition to its proteolytic activity, it binds to viral RNA, and thus influences viral genome replication. RNA and substrate bind cooperatively to the protease. Cleaves IKBKG/NEMO to impair innate immune signaling. Cleaves host PABPC1 which may participate in the switch of viral translation to RNA synthesis. Functionally, interacts with the 3AB precursor and with RNA structures found at both the 5'- and 3'-termini of the viral genome. Disrupts TLR3 signaling by degrading the host adapter protein TICAM1/TRIF. Its function is as follows. RNA-directed RNA polymerase 3D-POL replicates genomic and antigenomic RNA by recognizing replications specific signals. The chain is Genome polyprotein from Cercopithecus hamlyni (Owl-faced monkey).